The primary structure comprises 60 residues: MDPCECSKTGSCNCGGSCKCSNCACTSCKKSCCPCCPSDCSKCASGCVCKGKTCDTSCCQ.

A beta region spans residues 1–28 (MDPCECSKTGSCNCGGSCKCSNCACTSC). A divalent metal cation contacts are provided by cysteine 4, cysteine 6, cysteine 12, cysteine 14, cysteine 18, cysteine 20, cysteine 23, cysteine 25, cysteine 28, cysteine 32, cysteine 33, cysteine 35, cysteine 36, cysteine 40, cysteine 43, cysteine 47, cysteine 49, cysteine 54, cysteine 58, and cysteine 59. Residues 29-60 (KKSCCPCCPSDCSKCASGCVCKGKTCDTSCCQ) are alpha.

This sequence belongs to the metallothionein superfamily. Type 1 family.

Its function is as follows. Metallothioneins have a high content of cysteine residues that bind various heavy metals. The chain is Metallothionein B (mtb) from Oncorhynchus mykiss (Rainbow trout).